A 118-amino-acid chain; its full sequence is Ribosomal silencing factor RsfS (118 aa).

The protein belongs to the Iojap/RsfS family. As to quaternary structure, interacts with ribosomal protein uL14 (rplN).

It localises to the cytoplasm. Functions as a ribosomal silencing factor. Interacts with ribosomal protein uL14 (rplN), blocking formation of intersubunit bridge B8. Prevents association of the 30S and 50S ribosomal subunits and the formation of functional ribosomes, thus repressing translation. This is Ribosomal silencing factor RsfS from Bacillus subtilis (strain 168).